Consider the following 379-residue polypeptide: RIB43A-like with coiled-coils protein 1 (379 aa).

The disordered stretch occupies residues 1-21 (MYNIKQSTDTKEAAAIEARRN). Positions 8–21 (TDTKEAAAIEARRN) are enriched in basic and acidic residues. Coiled-coil stretches lie at residues 82–111 (KEEADRTRQLAKKVQEFREQKQQLKNGREF) and 216–304 (NANK…QAEK).

It belongs to the RIB43A family. In terms of assembly, microtubule inner protein component of sperm flagellar doublet microtubules.

It localises to the cytoplasm. Its subcellular location is the cytoskeleton. The protein localises to the flagellum axoneme. The polypeptide is RIB43A-like with coiled-coils protein 1 (RIBC1) (Homo sapiens (Human)).